Here is a 161-residue protein sequence, read N- to C-terminus: Cytochrome c-type biogenesis protein CcmE (161 aa).

Residues 1 to 8 are Cytoplasmic-facing; it reads MNPRRKKR. The helical; Signal-anchor for type II membrane protein transmembrane segment at 9-29 threads the bilayer; that stretch reads LGIVLAIFIGISATIGLMLYA. At 30-161 the chain is on the periplasmic side; it reads LNQNMDLFYT…SSEQKQGSGE (132 aa). The heme site is built by H129 and Y133. The interval 142 to 161 is disordered; it reads MKKTHEPLQYSSEQKQGSGE. Residues 150–161 are compositionally biased toward polar residues; it reads QYSSEQKQGSGE.

The protein belongs to the CcmE/CycJ family.

It is found in the cell inner membrane. Its function is as follows. Heme chaperone required for the biogenesis of c-type cytochromes. Transiently binds heme delivered by CcmC and transfers the heme to apo-cytochromes in a process facilitated by CcmF and CcmH. The protein is Cytochrome c-type biogenesis protein CcmE of Vibrio parahaemolyticus serotype O3:K6 (strain RIMD 2210633).